The following is a 245-amino-acid chain: MADTANYINDRFQTFMNGLGDRYEPYVREHLSKVYMVLGSTAAATAMGAMLQMRDFLDLGVLAAVATLVLVLGLHFYKDDGKNYYTRLGMLYAFGFCSGQTLGPLLGYICSINPAIILSALTGTFVTFISLSLSALLAEQGKYLYLGGMLVSVINTMALLSLFNMVFKSYFVQVTQLYVGVFVMAAFIVYDTQNIVEKCRNGNRDVVQHALDLFFDVLSMFRRLLIILTQKEERKQNERRQNKTK.

The Cytoplasmic portion of the chain corresponds to 1 to 30 (MADTANYINDRFQTFMNGLGDRYEPYVREH). A helical membrane pass occupies residues 31–51 (LSKVYMVLGSTAAATAMGAML). Residues 52–55 (QMRD) lie on the Lumenal side of the membrane. The helical transmembrane segment at 56 to 76 (FLDLGVLAAVATLVLVLGLHF) threads the bilayer. Over 77–88 (YKDDGKNYYTRL) the chain is Cytoplasmic. Residues 89-109 (GMLYAFGFCSGQTLGPLLGYI) traverse the membrane as a helical segment. Over 110-115 (CSINPA) the chain is Lumenal. Residues 116–136 (IILSALTGTFVTFISLSLSAL) form a helical membrane-spanning segment. Residues 137-142 (LAEQGK) are Cytoplasmic-facing. A helical membrane pass occupies residues 143-163 (YLYLGGMLVSVINTMALLSLF). Residues 164–169 (NMVFKS) are Lumenal-facing. A helical membrane pass occupies residues 170–190 (YFVQVTQLYVGVFVMAAFIVY). Residues 191 to 245 (DTQNIVEKCRNGNRDVVQHALDLFFDVLSMFRRLLIILTQKEERKQNERRQNKTK) lie on the Cytoplasmic side of the membrane.

Belongs to the BI1 family.

The protein resides in the endoplasmic reticulum membrane. In terms of biological role, suppressor of apoptosis. Modulates unfolded protein response signaling. Negatively regulates autophagy and autophagosome formation, especially during periods of nutrient deprivation, and reduces cell survival during starvation. This is Bax inhibitor 1 from Drosophila melanogaster (Fruit fly).